A 207-amino-acid polypeptide reads, in one-letter code: Large ribosomal subunit protein uL4 (207 aa).

Residues 45-78 (RQGTHKTKNRAEVSGGGRKPWRQKGTGRARQGSI) form a disordered region.

It belongs to the universal ribosomal protein uL4 family. Part of the 50S ribosomal subunit.

Functionally, one of the primary rRNA binding proteins, this protein initially binds near the 5'-end of the 23S rRNA. It is important during the early stages of 50S assembly. It makes multiple contacts with different domains of the 23S rRNA in the assembled 50S subunit and ribosome. In terms of biological role, forms part of the polypeptide exit tunnel. The chain is Large ribosomal subunit protein uL4 from Geobacillus sp. (strain WCH70).